A 53-amino-acid chain; its full sequence is Conotoxin Ac4.3b (53 aa).

Residues 1 to 11 (SDVRNAAVHER) constitute a propeptide that is removed on maturation. At Gln-12 the chain carries Pyrrolidone carboxylic acid. The residue at position 14 (Glu-14) is a 4-carboxyglutamate. Ser-18 is a glycosylation site (O-linked (HexNAc...) serine). A 4-hydroxyproline mark is found at Pro-28, Pro-33, and Pro-48. At Pro-48 the chain carries Proline amide. Positions 49–53 (GRRND) are excised as a propeptide.

This sequence belongs to the conotoxin A superfamily. In terms of processing, contains 3 disulfide bonds. Expressed by the venom duct.

The protein resides in the secreted. Functionally, probable neurotoxin with ion channel inhibitor activity. This chain is Conotoxin Ac4.3b, found in Conus achatinus (Little frog cone).